The following is a 109-amino-acid chain: Parvalbumin beta (109 aa).

Alanine 2 carries the post-translational modification N-acetylalanine. Positions 22-41 are igE-binding; sequence AGSFDHKKFFKACGLSGKST. EF-hand domains follow at residues 39–74 and 78–109; these read KSTD…FKAG and LSDA…MIKG. Positions 52, 54, 56, 58, 60, 63, 91, 93, 95, 97, and 102 each coordinate Ca(2+).

This sequence belongs to the parvalbumin family. Post-translationally, the N-terminus is blocked. In terms of tissue distribution, expressed in both white and dark muscles (at protein level). About eight and a half times lower expression in the dark muscle than in the white muscle (at protein level).

Its function is as follows. In muscle, parvalbumin is thought to be involved in relaxation after contraction. It binds two calcium ions. This is Parvalbumin beta from Scomber japonicus (Chub mackerel).